We begin with the raw amino-acid sequence, 94 residues long: Putative pterin-4-alpha-carbinolamine dehydratase (94 aa).

This sequence belongs to the pterin-4-alpha-carbinolamine dehydratase family.

The catalysed reaction is (4aS,6R)-4a-hydroxy-L-erythro-5,6,7,8-tetrahydrobiopterin = (6R)-L-erythro-6,7-dihydrobiopterin + H2O. The polypeptide is Putative pterin-4-alpha-carbinolamine dehydratase (Mycobacterium leprae (strain Br4923)).